A 252-amino-acid polypeptide reads, in one-letter code: Hydroxyacylglutathione hydrolase (252 aa).

Positions 54, 56, 58, 59, 111, 128, and 166 each coordinate Zn(2+).

Belongs to the metallo-beta-lactamase superfamily. Glyoxalase II family. As to quaternary structure, monomer. It depends on Zn(2+) as a cofactor.

It carries out the reaction an S-(2-hydroxyacyl)glutathione + H2O = a 2-hydroxy carboxylate + glutathione + H(+). The protein operates within secondary metabolite metabolism; methylglyoxal degradation; (R)-lactate from methylglyoxal: step 2/2. Its function is as follows. Thiolesterase that catalyzes the hydrolysis of S-D-lactoyl-glutathione to form glutathione and D-lactic acid. This is Hydroxyacylglutathione hydrolase from Photobacterium profundum (strain SS9).